A 1976-amino-acid polypeptide reads, in one-letter code: Protein TIC 214 (1976 aa).

6 consecutive transmembrane segments (helical) span residues 11-31 (LLLL…YYGF), 64-84 (FIMG…HLAL), 87-107 (PHTL…FFWN), 126-146 (LSIQ…HFVL), 173-193 (FFGW…VLSW), and 221-241 (IFSI…PSPI). The segment covering 619-635 (FEEEEEEEEEDDQEEST) has biased composition (acidic residues). 2 disordered regions span residues 619 to 642 (FEEE…GIRS) and 830 to 861 (SSYV…EDKR). The segment covering 836–861 (GAKEKEKIEEEHEEEKGEYKRKEDKR) has biased composition (basic and acidic residues). 2 helical membrane passes run 1054-1074 (IIKI…FFVL) and 1202-1222 (IYMS…QFFL). A compositionally biased stretch (basic and acidic residues) spans 1633–1665 (QKERFHPKPKVESNQKGYLELENRNRDEKERQH). The tract at residues 1633 to 1669 (QKERFHPKPKVESNQKGYLELENRNRDEKERQHQGNL) is disordered.

Belongs to the TIC214 family. Part of the Tic complex.

Its subcellular location is the plastid. The protein localises to the chloroplast inner membrane. In terms of biological role, involved in protein precursor import into chloroplasts. May be part of an intermediate translocation complex acting as a protein-conducting channel at the inner envelope. This chain is Protein TIC 214, found in Nymphaea alba (White water-lily).